The following is a 645-amino-acid chain: Bifurcating [FeFe] hydrogenase alpha subunit (645 aa).

The 2Fe-2S ferredoxin-type domain maps to 1-76; the sequence is MKIYVDGREV…GMKVKTNTPE (76 aa). The [2Fe-2S] cluster site is built by C34, C45, C48, and C60. The region spanning 76–115 is the 4Fe-4S His(Cys)3-ligated-type domain; sequence EIYEMRRNILELILATHNRDCTTCDRNGSCKLQKYAEDFG. H92, C96, C99, C105, C143, C146, C149, C153, C186, C189, C192, C196, C295, C350, C482, and C486 together coordinate [4Fe-4S] cluster. 2 4Fe-4S ferredoxin-type domains span residues 133–164 and 178–206; these read SAPVVRDTSKCILCGDCVRVCEEIQGVGVIEF and DTPLIETECVLCGQCVAYCPTGALSIRND. C486 serves as a coordination point for Fe(2+). The [2Fe-2S] cluster site is built by C575, C580, C612, and C616.

Heterotrimer composed of HydA (alpha subunit), HydB (beta subunit) and HydC (gamma subunit). Near neutral and acidic pH conditions favor oligomerization of the heterotrimeric holoenzyme. [2Fe-2S] cluster is required as a cofactor. The cofactor is [4Fe-4S] cluster. It depends on Fe(2+) as a cofactor.

It localises to the cytoplasm. It catalyses the reaction 2 H2 + 2 oxidized [2Fe-2S]-[ferredoxin] + NAD(+) = 2 reduced [2Fe-2S]-[ferredoxin] + NADH + 3 H(+). In terms of biological role, catalyzes the oxidation of the physiological electron carriers NADH and reduced ferredoxin, coupled to the production of H(2). Acts as a bifurcating [FeFe] hydrogenase, which uses the exergonic oxidation of reduced ferredoxin to drive the unfavorable oxidation of NADH to produce H(2). The alpha subunit contains the catalytic H-cluster. The chain is Bifurcating [FeFe] hydrogenase alpha subunit from Thermotoga maritima (strain ATCC 43589 / DSM 3109 / JCM 10099 / NBRC 100826 / MSB8).